The sequence spans 297 residues: 4-hydroxy-tetrahydrodipicolinate synthase (297 aa).

Residue Thr49 coordinates pyruvate. The Proton donor/acceptor role is filled by Tyr137. Lys166 serves as the catalytic Schiff-base intermediate with substrate. Ile208 contributes to the pyruvate binding site.

It belongs to the DapA family. In terms of assembly, homotetramer; dimer of dimers.

The protein localises to the cytoplasm. It catalyses the reaction L-aspartate 4-semialdehyde + pyruvate = (2S,4S)-4-hydroxy-2,3,4,5-tetrahydrodipicolinate + H2O + H(+). It functions in the pathway amino-acid biosynthesis; L-lysine biosynthesis via DAP pathway; (S)-tetrahydrodipicolinate from L-aspartate: step 3/4. Its function is as follows. Catalyzes the condensation of (S)-aspartate-beta-semialdehyde [(S)-ASA] and pyruvate to 4-hydroxy-tetrahydrodipicolinate (HTPA). The polypeptide is 4-hydroxy-tetrahydrodipicolinate synthase (Parabacteroides distasonis (strain ATCC 8503 / DSM 20701 / CIP 104284 / JCM 5825 / NCTC 11152)).